Consider the following 1704-residue polypeptide: Arf-GAP with Rho-GAP domain, ANK repeat and PH domain-containing protein 2 (1704 aa).

Residues 6–70 (EVNVDIKDFL…LKQLQIILSK (65 aa)) form the SAM domain. Residue Tyr-77 is modified to Phosphotyrosine. A disordered region spans residues 126-161 (NLEDSDASVERSQYPQSDDKLSPPKRDFPTAEEPHL). Positions 142–160 (SDDKLSPPKRDFPTAEEPH) are enriched in basic and acidic residues. PH domains lie at 482–574 (KKVK…NALK) and 587–679 (TPEK…QSIA). Positions 676–811 (QSIAETLSDY…TLLASLTKEE (136 aa)) constitute an Arf-GAP domain. The segment at 700–723 (CADCKAPDPDWASINLCVVICKKC) adopts a C4-type zinc-finger fold. PH domains are found at residues 878-1003 (DIHS…KHFV) and 1014-1114 (DYDL…AGTD). The 182-residue stretch at 1116-1297 (NALQDQQLSK…DLINNYVEIF (182 aa)) folds into the Rho-GAP domain. Positions 1326–1420 (GDLLIEVYVE…AYLVVKRFLT (95 aa)) constitute a Ras-associating domain. In terms of domain architecture, PH 5 spans 1434–1537 (GSIKEGILKI…WMTSIFIAQH (104 aa)). Position 1632 is a phosphoserine (Ser-1632). The interval 1636–1675 (LEDTEPEAPLGQPKGHKGLKTLRKTEDRNSKATLDSDHKL) is disordered. A compositionally biased stretch (basic and acidic residues) spans 1658–1675 (RKTEDRNSKATLDSDHKL).

Detected in brain, thymus, lymph node, thyroid, spinal cord, trachea, heart, skeletal muscle, spleen, kidney, liver, placenta, lung and peripheral blood leukocytes.

The protein resides in the cytoplasm. Phosphatidylinositol 3,4,5-trisphosphate-dependent GTPase-activating protein that modulates actin cytoskeleton remodeling by regulating ARF and RHO family members. Is activated by phosphatidylinositol 3,4,5-trisphosphate (PtdIns(3,4,5)P3) binding. Can be activated by phosphatidylinositol 3,4-bisphosphate (PtdIns(3,4,5)P2) binding, albeit with lower efficiency. In Homo sapiens (Human), this protein is Arf-GAP with Rho-GAP domain, ANK repeat and PH domain-containing protein 2 (ARAP2).